Reading from the N-terminus, the 536-residue chain is Probable 1,4-beta-D-glucan cellobiohydrolase B (536 aa).

Positions 1 to 21 (MSSFQVYRAALLLSILATANA) are cleaved as a signal peptide. The catalytic stretch occupies residues 22–458 (QQVGTYTTET…SNIKFGPIGS (437 aa)). E233 functions as the Nucleophile in the catalytic mechanism. The active-site Proton donor is E238. 2 N-linked (GlcNAc...) asparagine glycosylation sites follow: N351 and N414. The ser/Thr-rich linker stretch occupies residues 459-500 (TYSSGSSSGSGSSSSSSSTTTKATSTTLKTTSTTSSGSSSTS). Residues 464–499 (SSSGSGSSSSSSSTTTKATSTTLKTTSTTSSGSSST) are disordered. The CBM1 domain occupies 500–536 (SAAQAYGQCGGQGWTGPTTCVSGYTCTYENAYYSQCL). 2 disulfide bridges follow: C508–C525 and C519–C535.

It belongs to the glycosyl hydrolase 7 (cellulase C) family.

Its subcellular location is the secreted. It catalyses the reaction Hydrolysis of (1-&gt;4)-beta-D-glucosidic linkages in cellulose and cellotetraose, releasing cellobiose from the non-reducing ends of the chains.. Functionally, the biological conversion of cellulose to glucose generally requires three types of hydrolytic enzymes: (1) Endoglucanases which cut internal beta-1,4-glucosidic bonds; (2) Exocellobiohydrolases that cut the disaccharide cellobiose from the non-reducing end of the cellulose polymer chain; (3) Beta-1,4-glucosidases which hydrolyze the cellobiose and other short cello-oligosaccharides to glucose. The chain is Probable 1,4-beta-D-glucan cellobiohydrolase B (cbhB) from Aspergillus niger (strain ATCC MYA-4892 / CBS 513.88 / FGSC A1513).